Consider the following 172-residue polypeptide: Scytalone dehydratase-like protein Arp1 (172 aa).

Residue tyrosine 49 participates in substrate binding. Residues histidine 84 and histidine 109 contribute to the active site. Asparagine 130 is a substrate binding site.

This sequence belongs to the scytalone dehydratase family. In terms of assembly, homotrimer. Each subunit contains an active site, located in the central part of the hydrophobic core of the monomer, which functions independently.

Scytalone dehydratase-like protein; part of the Pks2 gene cluster that mediates the formation of infectious structures (appressoria), enabling these fungi to kill insects faster. The product of the Pks2 gene cluster is different from the one of Pks1 and has still not been identified. The protein is Scytalone dehydratase-like protein Arp1 of Metarhizium guizhouense (strain ARSEF 977).